Reading from the N-terminus, the 527-residue chain is Benzoate--CoA ligase (527 aa).

This sequence belongs to the ATP-dependent AMP-binding enzyme family. Benzoate-CoA ligase subfamily. As to quaternary structure, monomer.

The enzyme catalyses benzoate + ATP + CoA = benzoyl-CoA + AMP + diphosphate. Functionally, catalyzes the ligation of benzoate and CoA to form benzoyl-CoA at the expense of ATP. The enzyme also ligates 2-aminobenzoate and CoA. The enzyme shows activity toward a number of benzoate derivatives. The protein is Benzoate--CoA ligase (bclA) of Thauera aromatica.